We begin with the raw amino-acid sequence, 269 residues long: JmjC domain-containing protein 8 (269 aa).

An N-terminal signal peptide occupies residues 1–24 (MAAAGRRGLLLLFVLWMMVTVILP). Asn135, Asn145, and Asn214 each carry an N-linked (GlcNAc...) asparagine glycan. Residues 136–269 (DTLYFFGDNN…TSVFISTFLG (134 aa)) enclose the JmjC domain.

As to quaternary structure, oligomer. Dimer. Interacts with PKM; regulates angiogenesis and metabolism. N-glycosylated.

The protein localises to the endoplasmic reticulum lumen. The protein resides in the cytoplasm. In terms of biological role, functions as a positive regulator of TNF-induced NF-kappaB signaling. Regulates angiogenesis and cellular metabolism through interaction with PKM. In Mus musculus (Mouse), this protein is JmjC domain-containing protein 8.